The following is a 450-amino-acid chain: 23S rRNA (uracil(1939)-C(5))-methyltransferase RlmD (450 aa).

In terms of domain architecture, TRAM spans 1 to 62; sequence MPVAGPLEIV…PSYEQATLVD (62 aa). [4Fe-4S] cluster-binding residues include Cys-75, Cys-81, Cys-84, and Cys-163. Positions 271, 300, 305, 321, 349, and 370 each coordinate S-adenosyl-L-methionine. Catalysis depends on Cys-406, which acts as the Nucleophile.

The protein belongs to the class I-like SAM-binding methyltransferase superfamily. RNA M5U methyltransferase family. RlmD subfamily.

It catalyses the reaction uridine(1939) in 23S rRNA + S-adenosyl-L-methionine = 5-methyluridine(1939) in 23S rRNA + S-adenosyl-L-homocysteine + H(+). Catalyzes the formation of 5-methyl-uridine at position 1939 (m5U1939) in 23S rRNA. The protein is 23S rRNA (uracil(1939)-C(5))-methyltransferase RlmD of Ralstonia nicotianae (strain ATCC BAA-1114 / GMI1000) (Ralstonia solanacearum).